The primary structure comprises 182 residues: MRILGIDPGLRTTGFGVIDVAGADLTYVASGTISTLHLDKGQLPARLKVLFDGIREVVARYQPECASVEIVFVNVNPQSTLLLGQARGACITALVSGDLPVAEYTALQMKQAVVGYGRADKSQVQEMVRRLLALPGLPGPDAADALGLAITHAHAAKALARLAQADGVMGAGSGKYKAGRSR.

Residues D7, E69, and D141 contribute to the active site. Residues D7, E69, and D141 each coordinate Mg(2+).

This sequence belongs to the RuvC family. In terms of assembly, homodimer which binds Holliday junction (HJ) DNA. The HJ becomes 2-fold symmetrical on binding to RuvC with unstacked arms; it has a different conformation from HJ DNA in complex with RuvA. In the full resolvosome a probable DNA-RuvA(4)-RuvB(12)-RuvC(2) complex forms which resolves the HJ. Requires Mg(2+) as cofactor.

The protein resides in the cytoplasm. It catalyses the reaction Endonucleolytic cleavage at a junction such as a reciprocal single-stranded crossover between two homologous DNA duplexes (Holliday junction).. Functionally, the RuvA-RuvB-RuvC complex processes Holliday junction (HJ) DNA during genetic recombination and DNA repair. Endonuclease that resolves HJ intermediates. Cleaves cruciform DNA by making single-stranded nicks across the HJ at symmetrical positions within the homologous arms, yielding a 5'-phosphate and a 3'-hydroxyl group; requires a central core of homology in the junction. The consensus cleavage sequence is 5'-(A/T)TT(C/G)-3'. Cleavage occurs on the 3'-side of the TT dinucleotide at the point of strand exchange. HJ branch migration catalyzed by RuvA-RuvB allows RuvC to scan DNA until it finds its consensus sequence, where it cleaves and resolves the cruciform DNA. The sequence is that of Crossover junction endodeoxyribonuclease RuvC from Albidiferax ferrireducens (strain ATCC BAA-621 / DSM 15236 / T118) (Rhodoferax ferrireducens).